Reading from the N-terminus, the 689-residue chain is Glycine--tRNA ligase beta subunit (689 aa).

The protein belongs to the class-II aminoacyl-tRNA synthetase family. In terms of assembly, tetramer of two alpha and two beta subunits.

Its subcellular location is the cytoplasm. The enzyme catalyses tRNA(Gly) + glycine + ATP = glycyl-tRNA(Gly) + AMP + diphosphate. In Coxiella burnetii (strain RSA 493 / Nine Mile phase I), this protein is Glycine--tRNA ligase beta subunit (glyS).